The chain runs to 452 residues: Chloride/fluoride channel protein (452 aa).

Transmembrane regions (helical) follow at residues 23-43, 57-77, 97-117, 160-180, 188-208, 222-242, 264-284, 315-337, 344-364, and 386-408; these read WLAL…LFLL, WVIW…HLIG, IVPL…HLFG, FASV…VLAI, LFPC…WGVV, LWSV…GLLF, PFAG…NHYI, VFTV…FYIG, LAPL…VAVF, and IAPL…GIYH.

This sequence belongs to the chloride channel (TC 2.A.49) family.

It localises to the cell membrane. Transports chloride and fluoride with similar efficiency. This is Chloride/fluoride channel protein (eriC) from Pseudomonas syringae pv. tomato (strain ATCC BAA-871 / DC3000).